The primary structure comprises 121 residues: Small ribosomal subunit protein uS13 (121 aa).

Residues Pro-96 to Lys-121 are disordered. Positions Ala-106–Lys-121 are enriched in basic residues.

The protein belongs to the universal ribosomal protein uS13 family. As to quaternary structure, part of the 30S ribosomal subunit. Forms a loose heterodimer with protein S19. Forms two bridges to the 50S subunit in the 70S ribosome.

Its function is as follows. Located at the top of the head of the 30S subunit, it contacts several helices of the 16S rRNA. In the 70S ribosome it contacts the 23S rRNA (bridge B1a) and protein L5 of the 50S subunit (bridge B1b), connecting the 2 subunits; these bridges are implicated in subunit movement. Contacts the tRNAs in the A and P-sites. The protein is Small ribosomal subunit protein uS13 of Streptococcus agalactiae serotype Ia (strain ATCC 27591 / A909 / CDC SS700).